We begin with the raw amino-acid sequence, 94 residues long: Co-chaperonin GroES (94 aa).

It belongs to the GroES chaperonin family. In terms of assembly, heptamer of 7 subunits arranged in a ring. Interacts with the chaperonin GroEL.

The protein resides in the cytoplasm. Functionally, together with the chaperonin GroEL, plays an essential role in assisting protein folding. The GroEL-GroES system forms a nano-cage that allows encapsulation of the non-native substrate proteins and provides a physical environment optimized to promote and accelerate protein folding. GroES binds to the apical surface of the GroEL ring, thereby capping the opening of the GroEL channel. The protein is Co-chaperonin GroES of Ehrlichia chaffeensis (strain ATCC CRL-10679 / Arkansas).